The primary structure comprises 211 residues: Putative truncated flagellar export/assembly protein LafU (211 aa).

Residues 58 to 176 (LRVLIKDDQN…RIEIMVLTKS (119 aa)) enclose the OmpA-like domain.

The protein belongs to the MotB family.

This is Putative truncated flagellar export/assembly protein LafU from Escherichia coli (strain K12).